Reading from the N-terminus, the 348-residue chain is D-erythrose-4-phosphate dehydrogenase (348 aa).

NAD(+) is bound by residues 12-13 (RI) and R81. Substrate contacts are provided by residues 154 to 156 (SCT), R200, 213 to 214 (TK), and R236. Residue C155 is the Nucleophile of the active site. Residue N318 coordinates NAD(+).

This sequence belongs to the glyceraldehyde-3-phosphate dehydrogenase family. Epd subfamily. As to quaternary structure, homotetramer.

It is found in the cytoplasm. It carries out the reaction D-erythrose 4-phosphate + NAD(+) + H2O = 4-phospho-D-erythronate + NADH + 2 H(+). The protein operates within cofactor biosynthesis; pyridoxine 5'-phosphate biosynthesis; pyridoxine 5'-phosphate from D-erythrose 4-phosphate: step 1/5. In terms of biological role, catalyzes the NAD-dependent conversion of D-erythrose 4-phosphate to 4-phosphoerythronate. This chain is D-erythrose-4-phosphate dehydrogenase, found in Salmonella agona (strain SL483).